A 463-amino-acid polypeptide reads, in one-letter code: Probable Xaa-Pro aminopeptidase PEPP (463 aa).

Mn(2+)-binding residues include Asp-259, Asp-270, Glu-393, and Glu-433.

This sequence belongs to the peptidase M24B family. The cofactor is Mn(2+).

The catalysed reaction is Release of any N-terminal amino acid, including proline, that is linked to proline, even from a dipeptide or tripeptide.. In terms of biological role, catalyzes the removal of a penultimate prolyl residue from the N-termini of peptides. The protein is Probable Xaa-Pro aminopeptidase PEPP (PEPP) of Phaeosphaeria nodorum (strain SN15 / ATCC MYA-4574 / FGSC 10173) (Glume blotch fungus).